Here is a 159-residue protein sequence, read N- to C-terminus: NADH-quinone oxidoreductase subunit I (159 aa).

4Fe-4S ferredoxin-type domains lie at 51-80 and 90-119; these read RRYE…IEAD and TRYD…EGPN. The [4Fe-4S] cluster site is built by Cys60, Cys63, Cys66, Cys70, Cys99, Cys102, Cys105, and Cys109.

Belongs to the complex I 23 kDa subunit family. NDH-1 is composed of 14 different subunits. Subunits NuoA, H, J, K, L, M, N constitute the membrane sector of the complex. Requires [4Fe-4S] cluster as cofactor.

The protein localises to the cell inner membrane. It catalyses the reaction a quinone + NADH + 5 H(+)(in) = a quinol + NAD(+) + 4 H(+)(out). Functionally, NDH-1 shuttles electrons from NADH, via FMN and iron-sulfur (Fe-S) centers, to quinones in the respiratory chain. The immediate electron acceptor for the enzyme in this species is believed to be ubiquinone. Couples the redox reaction to proton translocation (for every two electrons transferred, four hydrogen ions are translocated across the cytoplasmic membrane), and thus conserves the redox energy in a proton gradient. The polypeptide is NADH-quinone oxidoreductase subunit I (Rickettsia felis (strain ATCC VR-1525 / URRWXCal2) (Rickettsia azadi)).